The sequence spans 27 residues: ISSPVSXLTIHPLRNIMDMLYVGXITI.

This sequence belongs to the peptidase A1 family. In terms of processing, glycosylated. Placenta.

This is Pregnancy-associated glycoprotein 55 (PAG55) from Capra hircus (Goat).